The sequence spans 165 residues: Phosphopantetheine adenylyltransferase (165 aa).

T10 is a substrate binding site. ATP contacts are provided by residues 10-11 (TF) and H18. K42, L75, and R89 together coordinate substrate. Residues 90–92 (GVR), E100, and 125–131 (VSFISSS) contribute to the ATP site.

This sequence belongs to the bacterial CoaD family. In terms of assembly, homohexamer. Requires Mg(2+) as cofactor.

It localises to the cytoplasm. It carries out the reaction (R)-4'-phosphopantetheine + ATP + H(+) = 3'-dephospho-CoA + diphosphate. It functions in the pathway cofactor biosynthesis; coenzyme A biosynthesis; CoA from (R)-pantothenate: step 4/5. Functionally, reversibly transfers an adenylyl group from ATP to 4'-phosphopantetheine, yielding dephospho-CoA (dPCoA) and pyrophosphate. This chain is Phosphopantetheine adenylyltransferase, found in Buchnera aphidicola subsp. Schizaphis graminum (strain Sg).